A 369-amino-acid polypeptide reads, in one-letter code: Tryptophan 2,3-dioxygenase 2 (369 aa).

Substrate contacts are provided by residues 36–40 (FIVVH) and R107. H303 contributes to the heme binding site. T317 is a binding site for substrate.

The protein belongs to the tryptophan 2,3-dioxygenase family. Homotetramer. The cofactor is heme.

The enzyme catalyses L-tryptophan + O2 = N-formyl-L-kynurenine. It functions in the pathway amino-acid degradation; L-tryptophan degradation via kynurenine pathway; L-kynurenine from L-tryptophan: step 1/2. Heme-dependent dioxygenase that catalyzes the oxidative cleavage of the L-tryptophan (L-Trp) pyrrole ring and converts L-tryptophan to N-formyl-L-kynurenine. Catalyzes the oxidative cleavage of the indole moiety. The protein is Tryptophan 2,3-dioxygenase 2 of Ralstonia nicotianae (strain ATCC BAA-1114 / GMI1000) (Ralstonia solanacearum).